A 145-amino-acid polypeptide reads, in one-letter code: Superoxide dismutase [Mn/Fe] (145 aa).

The Fe(3+) site is built by His10 and His64. The Mn(2+) site is built by His10 and His64. The tract at residues 126 to 145 (TSTANQDTPISEGKKPILGL) is disordered.

This sequence belongs to the iron/manganese superoxide dismutase family. It depends on Mn(2+) as a cofactor. Fe(3+) serves as cofactor.

The catalysed reaction is 2 superoxide + 2 H(+) = H2O2 + O2. Functionally, destroys superoxide anion radicals which are normally produced within the cells and which are toxic to biological systems. Catalyzes the dismutation of superoxide anion radicals into O2 and H2O2 by successive reduction and oxidation of the transition metal ion at the active site. The chain is Superoxide dismutase [Mn/Fe] (sodA) from Streptococcus oralis.